Consider the following 659-residue polypeptide: MMQESGTEAANGTAHQNGAPPSVEGHREVRSKSTTPSSDITASDIINFQQHQALQVARQILLQQQQQSSVHKSPKNNDKQPATQVPVSVAMMTPQVITPQQMQQILQHQVLSPQQLQLLLQQQQALMLQQQLQEFYKKQQEQLHLQLIQQQHGSKQQSKEVSAQQLAFQQQLLQVQQLQQQHLLSLQRQGLLSIQPNQTLPLHTLTQGMIPAELQQLWKEVTNSHVKEENSVTNNGHRGLDLSSPSPVPLKNHNQHGSTNGQYISHSLKREGSTLDDHSPHSHPLYGHGVCKWPGCEAVFEDFQSFLKHLNNEHALDDRSTAQCRVQMQVVQQLELQLAKDKERLQAMMTHLHVKSTEPKPTPQPLNLVSNVALSKTAPAASPPLSLPQTPTTPTAPLTPLSQTHSVITPTSLHSVGPIRRRYSDKYNMPISPDIVQNKEFYMNAEVRPPFTYASLIRQAILESPEKQLTLNEIYNWFTRMFAYFRRNAATWKNAVRHNLSLHKCFVRVENVKGAVWTVDELEFQKRRPQKISGSPALVKNIHTTLGYGPALSAAFQASMAENIPLYTTASIGSPTLNSLASVIREEMNGAMDHGNSNGSDSSPGRSPLPAMHHISVKEEPMDPEEHEGPLSLVTTANHSPDFDHHRDYEDDHGTEDML.

Polar residues-rich tracts occupy residues Met1–Gln16 and Lys32–Thr41. 2 disordered regions span residues Met1–Thr41 and Glu229–Tyr263. Residues Gly289–His314 form a C2H2-type zinc finger. A leucine-zipper region spans residues Val331 to Leu352. Positions Pro365–Val369 are CTBP1-binding. Residues Pro379–Leu413 form a disordered region. The segment covering Leu387–Thr404 has biased composition (low complexity). The segment at residues Arg448–Leu538 is a DNA-binding region (fork-head). A disordered region spans residues Gly590–Leu659. The segment covering Gly595 to Gly605 has biased composition (polar residues). The segment covering Pro641–Leu659 has biased composition (basic and acidic residues).

As to expression, shows complex and dynamic expression during early embryonic development. Prominent in many regions of the developing central nervous system, particularly in midbrain-hindbrain boundary, hindbrain and spinal cord. Strongly expressed in the retina, ear, branchial arches, hatching gland, heart, pronephric duct, gut, proctodeum, pectoral fin and swim bladder.

It localises to the nucleus. Transcriptional repressor. The chain is Forkhead box protein P1-B (foxp1b) from Danio rerio (Zebrafish).